The sequence spans 367 residues: Probable butyrate kinase (367 aa).

This sequence belongs to the acetokinase family.

It localises to the cytoplasm. It catalyses the reaction butanoate + ATP = butanoyl phosphate + ADP. This is Probable butyrate kinase from Exiguobacterium sibiricum (strain DSM 17290 / CCUG 55495 / CIP 109462 / JCM 13490 / 255-15).